Here is a 144-residue protein sequence, read N- to C-terminus: 3-dehydroquinate dehydratase (144 aa).

The active-site Proton acceptor is the Tyr-23. Substrate is bound by residues Asn-74, His-80, and Asp-87. His-100 functions as the Proton donor in the catalytic mechanism. Substrate-binding positions include 101–102 (LS) and Arg-111.

This sequence belongs to the type-II 3-dehydroquinase family. As to quaternary structure, homododecamer.

It catalyses the reaction 3-dehydroquinate = 3-dehydroshikimate + H2O. It functions in the pathway metabolic intermediate biosynthesis; chorismate biosynthesis; chorismate from D-erythrose 4-phosphate and phosphoenolpyruvate: step 3/7. Its function is as follows. Catalyzes a trans-dehydration via an enolate intermediate. This chain is 3-dehydroquinate dehydratase, found in Hydrogenovibrio crunogenus (strain DSM 25203 / XCL-2) (Thiomicrospira crunogena).